The sequence spans 809 residues: Trimethylamine-N-oxide reductase 2 (809 aa).

The tat-type signal signal peptide spans 1-31 (MTLTRREFIKHSGIAAGTLVVTSAAPLPAWA). Ser-176 is a Mo-bis(molybdopterin guanine dinucleotide) binding site.

Belongs to the prokaryotic molybdopterin-containing oxidoreductase family. It depends on Mo-bis(molybdopterin guanine dinucleotide) as a cofactor. Post-translationally, predicted to be exported by the Tat system. The position of the signal peptide cleavage has not been experimentally proven.

The protein resides in the periplasm. It catalyses the reaction trimethylamine + 2 Fe(III)-[cytochrome c] + H2O = trimethylamine N-oxide + 2 Fe(II)-[cytochrome c] + 3 H(+). In terms of biological role, reduces trimethylamine-N-oxide (TMAO) into trimethylamine; an anaerobic reaction coupled to energy-yielding reactions. Can also reduce other N- and S-oxide compounds such as 4-methylmorpholine-N-oxide and biotin sulfoxide (BSO), but with a lower catalytic efficiency. This Escherichia coli O6:H1 (strain CFT073 / ATCC 700928 / UPEC) protein is Trimethylamine-N-oxide reductase 2 (torZ).